The following is a 180-amino-acid chain: Cell division protein SepF (180 aa).

The interval 1 to 66 (MAFSFKSFFG…NRNGFAYDNG (66 aa)) is disordered. Residues 12-23 (ADDEEEEYEDSG) are compositionally biased toward acidic residues. Residues 24–57 (YEQQPNQGQQQPVNSQQQNTSNQSYSGYNNQNQN) are compositionally biased toward low complexity.

This sequence belongs to the SepF family. As to quaternary structure, homodimer. Interacts with FtsZ.

It is found in the cytoplasm. Functionally, cell division protein that is part of the divisome complex and is recruited early to the Z-ring. Probably stimulates Z-ring formation, perhaps through the cross-linking of FtsZ protofilaments. Its function overlaps with FtsA. This chain is Cell division protein SepF, found in Oenococcus oeni (strain ATCC BAA-331 / PSU-1).